Reading from the N-terminus, the 425-residue chain is 3-isopropylmalate dehydratase large subunit (425 aa).

Positions 305, 365, and 368 each coordinate [4Fe-4S] cluster.

Belongs to the aconitase/IPM isomerase family. LeuC type 2 subfamily. Heterodimer of LeuC and LeuD. The cofactor is [4Fe-4S] cluster.

It carries out the reaction (2R,3S)-3-isopropylmalate = (2S)-2-isopropylmalate. The protein operates within amino-acid biosynthesis; L-leucine biosynthesis; L-leucine from 3-methyl-2-oxobutanoate: step 2/4. Functionally, catalyzes the isomerization between 2-isopropylmalate and 3-isopropylmalate, via the formation of 2-isopropylmaleate. The chain is 3-isopropylmalate dehydratase large subunit from Clostridioides difficile (strain 630) (Peptoclostridium difficile).